We begin with the raw amino-acid sequence, 59 residues long: Embryonic testis differentiation protein (59 aa).

Positions 1-28 (MDEKNPEAVPRPPEQNTELVPPKKSKSK) are disordered.

Specifically expressed in testis.

The sequence is that of Embryonic testis differentiation protein from Mus musculus (Mouse).